The following is a 200-amino-acid chain: Recombination protein RecR (200 aa).

The C4-type zinc-finger motif lies at 58-75; the sequence is CSNCFCLKISQTSPCNFC. The region spanning 82–177 is the Toprim domain; it reads SSLCIVATPK…KISRLALGMP (96 aa).

This sequence belongs to the RecR family.

Functionally, may play a role in DNA repair. It seems to be involved in an RecBC-independent recombinational process of DNA repair. It may act with RecF and RecO. The polypeptide is Recombination protein RecR (Chlamydia trachomatis serovar D (strain ATCC VR-885 / DSM 19411 / UW-3/Cx)).